The primary structure comprises 476 residues: Glycogen synthase (476 aa).

Lys-15 is a binding site for ADP-alpha-D-glucose.

It belongs to the glycosyltransferase 1 family. Bacterial/plant glycogen synthase subfamily.

It catalyses the reaction [(1-&gt;4)-alpha-D-glucosyl](n) + ADP-alpha-D-glucose = [(1-&gt;4)-alpha-D-glucosyl](n+1) + ADP + H(+). Its pathway is glycan biosynthesis; glycogen biosynthesis. Synthesizes alpha-1,4-glucan chains using ADP-glucose. The chain is Glycogen synthase from Marinomonas sp. (strain MWYL1).